Consider the following 114-residue polypeptide: MPRSVNAVASRARRKRVIKLAKGYWGRRKNAWTIAKNAVERALQYAYRDRKAKKREFRRLWIQRINAAAKMNGLSYSQFMGKLAASGIELNRKVLADLAMNNPEAFKEILKKVA.

Belongs to the bacterial ribosomal protein bL20 family.

In terms of biological role, binds directly to 23S ribosomal RNA and is necessary for the in vitro assembly process of the 50S ribosomal subunit. It is not involved in the protein synthesizing functions of that subunit. In Amoebophilus asiaticus (strain 5a2), this protein is Large ribosomal subunit protein bL20.